The primary structure comprises 946 residues: Multiple C2 and transmembrane domain-containing protein 1 (946 aa).

Disordered stretches follow at residues 28 to 193 and 205 to 229; these read QLGV…QKSS and LEPA…KGEE. Over residues 31–43 the composition is skewed to gly residues; the sequence is VGKGKGGGGGRAG. A compositionally biased stretch (polar residues) spans 87-96; that stretch reads FSSSQPNLCC. The segment covering 143 to 163 has biased composition (low complexity); the sequence is PGGRSPDSAPSSSASSSLSSS. Residues 169-187 are compositionally biased toward basic and acidic residues; it reads RGDRIRDEGTRRGSPEAHL. C2 domains follow at residues 235–353, 399–516, and 550–671; these read KINP…DVTL, QTQS…KLEL, and HKER…AYVL. 15 residues coordinate Ca(2+): Asp270, Asp276, Asp323, Asp325, Asp331, Asp433, Asp439, Asp486, Asp488, Asp494, Asp589, Asp595, Asp641, Asp643, and Asp649. 2 helical membrane-spanning segments follow: residues 758–778 and 861–881; these read FVLF…LLLL and PFLS…LYFI.

The protein belongs to the MCTP family. It depends on Ca(2+) as a cofactor. In terms of tissue distribution, expressed in the brain and central nervous system (at protein level). Isoform 1 and isoform 2 are expressed in the brain, kidney, liver, heart, lung, skeletal muscle, testis and spleen. Isoform 2 shows a higher expression in the brain, heart and skeletal muscle.

The protein resides in the cytoplasmic vesicle. It localises to the secretory vesicle. It is found in the synaptic vesicle membrane. Its subcellular location is the recycling endosome. The protein localises to the endoplasmic reticulum membrane. Functionally, calcium sensor which is essential for the stabilization of normal baseline neurotransmitter release and for the induction and long-term maintenance of presynaptic homeostatic plasticity. Overexpression in cultured neurons significantly inhibits neuronal transferrin endocytosis, secretory vesicle retrieval, cell migration, and oxidative stress from glutamate toxicity. The protein is Multiple C2 and transmembrane domain-containing protein 1 of Rattus norvegicus (Rat).